The sequence spans 51 residues: Large ribosomal subunit protein eL40 (51 aa).

The protein belongs to the eukaryotic ribosomal protein eL40 family.

The polypeptide is Large ribosomal subunit protein eL40 (Thermofilum pendens (strain DSM 2475 / Hrk 5)).